The primary structure comprises 459 residues: Pentatricopeptide repeat-containing protein At5g18390, mitochondrial (459 aa).

Residues 1–7 (MLLLRRY) constitute a mitochondrion transit peptide. PPR repeat units lie at residues 110–144 (TSMEYEELAKSLASHKKYESMWKILKQMKDLSLDI), 145–175 (SGETLCFIIEQYGKNGHVDQAVELFNGVPKT), 181–215 (TVDVYNSLLHALCDVKMFHGAYALIRRMIRKGLKP), 216–250 (DKRTYAILVNGWCSAGKMKEAQEFLDEMSRRGFNP), 251–285 (PARGRDLLIEGLLNAGYLESAKEMVSKMTKGGFVP), 286–320 (DIQTFNILIEAISKSGEVEFCIEMYYTACKLGLCV), 321–355 (DIDTYKTLIPAVSKIGKIDEAFRLLNNCVEDGHKP), 356–390 (FPSLYAPIIKGMCRNGMFDDAFSFFSDMKVKAHPP), and 391–425 (NRPVYTMLITMCGRGGKFVDAANYLVEMTEMGLVP).

Belongs to the PPR family. P subfamily.

It localises to the mitochondrion. This chain is Pentatricopeptide repeat-containing protein At5g18390, mitochondrial, found in Arabidopsis thaliana (Mouse-ear cress).